We begin with the raw amino-acid sequence, 301 residues long: HTH-type transcriptional regulator AbaB (301 aa).

Residues 1 to 58 enclose the HTH lysR-type domain; that stretch reads MDLALLRTFVTVHRAGSFTRAAALLGLSQPAVTSQIRTLERQLGRPLFLRQARGVTPT. Positions 18–37 form a DNA-binding region, H-T-H motif; it reads FTRAAALLGLSQPAVTSQIR.

It belongs to the LysR transcriptional regulatory family.

Its function is as follows. Putative regulator that may be involved in stimulating antibiotic production in S.antibioticus. The protein is HTH-type transcriptional regulator AbaB of Streptomyces antibioticus.